The primary structure comprises 124 residues: Secretion system apparatus protein SsaP (124 aa).

The protein is Secretion system apparatus protein SsaP (ssaP) of Salmonella typhi.